Here is a 96-residue protein sequence, read N- to C-terminus: Small ribosomal subunit protein uS17 (96 aa).

The protein belongs to the universal ribosomal protein uS17 family. As to quaternary structure, part of the 30S ribosomal subunit.

Functionally, one of the primary rRNA binding proteins, it binds specifically to the 5'-end of 16S ribosomal RNA. This is Small ribosomal subunit protein uS17 from Deinococcus radiodurans (strain ATCC 13939 / DSM 20539 / JCM 16871 / CCUG 27074 / LMG 4051 / NBRC 15346 / NCIMB 9279 / VKM B-1422 / R1).